We begin with the raw amino-acid sequence, 454 residues long: UPF0210 protein BAD_1323 (454 aa).

The protein belongs to the UPF0210 family. As to quaternary structure, homodimer.

The chain is UPF0210 protein BAD_1323 from Bifidobacterium adolescentis (strain ATCC 15703 / DSM 20083 / NCTC 11814 / E194a).